Consider the following 240-residue polypeptide: MEYPWLQSQVHSFSPTLHFPSFLHPLDDSKSHNINLHHMSLSHSNNTNSNNNNYQEEDRGAVVLEKKLNHNASERDRRRKLNALYSSLRALLPLSDQKRKLSIPMTVARVVKYIPEQKQELQRLSRRKEELLKRISRKTHQEQLRNKAMMDSIDSSSSQRIAANWLTDTEIAVQIATSKWTSVSDMLLRLEENGLNVISVSSSVSSTARIFYTLHLQMRGDCKVRLEELINGMLLGLRQS.

The 53-residue stretch at 65 to 117 (EKKLNHNASERDRRRKLNALYSSLRALLPLSDQKRKLSIPMTVARVVKYIPEQ) folds into the bHLH domain.

Homodimer. Flowers.

The protein localises to the nucleus. This is Transcription factor bHLH101 (BHLH101) from Arabidopsis thaliana (Mouse-ear cress).